The following is a 178-amino-acid chain: Large ribosomal subunit protein bL17 (178 aa).

It belongs to the bacterial ribosomal protein bL17 family. As to quaternary structure, part of the 50S ribosomal subunit. Contacts protein L32.

This is Large ribosomal subunit protein bL17 from Lachnospira eligens (strain ATCC 27750 / DSM 3376 / VPI C15-48 / C15-B4) (Eubacterium eligens).